A 216-amino-acid polypeptide reads, in one-letter code: Glutathione S-transferase 1, isoform B (216 aa).

The GST N-terminal domain occupies 1 to 80 (MDFYYLPGSA…YLVEKYGKPC (80 aa)). Residues Ser-9, 50-52 (HCV), and 64-66 (ESR) each bind glutathione. The GST C-terminal domain occupies 89 to 210 (DPQKRAIVNQ…RSWAEAARPF (122 aa)).

Belongs to the GST superfamily. Theta family. In terms of assembly, homodimer.

The enzyme catalyses RX + glutathione = an S-substituted glutathione + a halide anion + H(+). Functionally, conjugation of reduced glutathione to a wide number of exogenous and endogenous hydrophobic electrophiles. This is Glutathione S-transferase 1, isoform B from Anopheles gambiae (African malaria mosquito).